The primary structure comprises 122 residues: Large ribosomal subunit protein uL14 (122 aa).

Belongs to the universal ribosomal protein uL14 family. As to quaternary structure, part of the 50S ribosomal subunit. Forms a cluster with proteins L3 and L19. In the 70S ribosome, L14 and L19 interact and together make contacts with the 16S rRNA in bridges B5 and B8.

Functionally, binds to 23S rRNA. Forms part of two intersubunit bridges in the 70S ribosome. The polypeptide is Large ribosomal subunit protein uL14 (Lactobacillus acidophilus (strain ATCC 700396 / NCK56 / N2 / NCFM)).